Reading from the N-terminus, the 421-residue chain is MSKLTIVRGFNDVLPLDSYKWQFLESKVKLILDRYNYSETRLPIVERSELFHRSVGESSDIVSKETYDFQDRNGDSLTLRPEGTAGCVRMVIENNLATRGQTQKLWYCGPMFRYERPQKGRYRQFYQLGVEAYGFDGIAIDLEVIAIAWSLFKELGISEYVTLELNSLGSSLNRQEYTQALLQYLKPYHAELDEDSIKRLDKNPLRILDSKIEKTQKILANAPKLIDFIDHDLRLRFKQTCQYLDALGVRYKLNENLVRGLDYYTGLVFEWTTDKLGSQSAICAGGRYDGLVENLGGQKIAAIGFAIGMERLLLLLEDLGKLPNQDNACDVFFILDSAQLHQSLAIVENIRQELPQLKIDMDLKFGSFKSQFKKADKSGAKVAIIIGQDELDNGFAGIKFLQQNEEQQQVAFNELINFLER.

This sequence belongs to the class-II aminoacyl-tRNA synthetase family. As to quaternary structure, homodimer.

The protein resides in the cytoplasm. The enzyme catalyses tRNA(His) + L-histidine + ATP = L-histidyl-tRNA(His) + AMP + diphosphate + H(+). This is Histidine--tRNA ligase from Francisella tularensis subsp. holarctica (strain OSU18).